Here is a 438-residue protein sequence, read N- to C-terminus: UDP-N-acetyl-D-mannosamine dehydrogenase (438 aa).

6 residues coordinate NAD(+): Tyr-21, Ile-22, Asp-41, Arg-46, Thr-93, and Thr-131. The UDP-N-acetyl-alpha-D-mannosaminouronate site is built by Arg-160, Val-161, Lys-212, Asn-216, Arg-219, His-250, Arg-252, and Gly-263. Lys-212 functions as the Proton donor/acceptor in the catalytic mechanism. The Nucleophile role is filled by Cys-266. UDP-N-acetyl-alpha-D-mannosaminouronate-binding residues include Tyr-323 and Lys-324. Arg-331 contributes to the NAD(+) binding site. Lys-409 serves as a coordination point for UDP-N-acetyl-alpha-D-mannosaminouronate.

The protein belongs to the UDP-glucose/GDP-mannose dehydrogenase family. As to quaternary structure, homotetramer; probably dimer of dimers.

The catalysed reaction is UDP-N-acetyl-alpha-D-mannosamine + 2 NAD(+) + H2O = UDP-N-acetyl-alpha-D-mannosaminouronate + 2 NADH + 3 H(+). Functionally, catalyzes the four-electron oxidation of UDP-N-acetyl-D-mannosamine (UDP-ManNAc), reducing NAD(+) and releasing UDP-N-acetylmannosaminuronic acid (UDP-ManNAcA). The polypeptide is UDP-N-acetyl-D-mannosamine dehydrogenase (wecC) (Methanococcus aeolicus (strain ATCC BAA-1280 / DSM 17508 / OCM 812 / Nankai-3)).